Here is a 334-residue protein sequence, read N- to C-terminus: Leucine-rich repeat-containing protein 26 (334 aa).

The N-terminal stretch at 1 to 30 (MRGSFFSRLPPQLSLLLLLLLLLSWRRVWT) is a signal peptide. The Extracellular segment spans residues 31–265 (QEHIGTDPSK…QCTQSLAARD (235 aa)). One can recognise an LRRNT domain in the interval 38-75 (PSKSPVAPVCPEACSCSPGGKANCSALALPAVPAGLSW). Intrachain disulfides connect C47/C53 and C51/C61. 5 LRR repeats span residues 76-97 (QVRSLLLDRNRVSTLPPGAFAD), 100-121 (ALLYLVLRENRLRSVHARAFWG), 124-145 (VLQRLDLSSNQLETLSPGTFTP), 148-169 (ALSFLSLAGNRLALLEPSILGP), and 172-194 (LLRVLSLQDNSLSALEAGLLNSL). The 55-residue stretch at 205–259 (NPWACSCALRPLCTWLRKHPRPTSETETLLCVSPKLQTLNLLTDFPDNAFKQCTQ) folds into the LRRCT domain. 2 cysteine pairs are disulfide-bonded: C209-C235 and C211-C257. A helical transmembrane segment spans residues 266-286 (LAVVYALGPASFLASLAICLA). Topologically, residues 287 to 334 (LGSVLTACGARRRRRRTTVRHLIRRQPDPEGPASLEDVGSPTTTAIQA) are cytoplasmic. Residues 312–334 (QPDPEGPASLEDVGSPTTTAIQA) are disordered.

As to quaternary structure, interacts with KCNMA1.

The protein resides in the cell membrane. It is found in the cytoplasm. It localises to the cytoskeleton. Its function is as follows. Auxiliary protein of the large-conductance, voltage and calcium-activated potassium channel (BK alpha). Required for the conversion of BK alpha channels from a high-voltage to a low-voltage activated channel type in non-excitable cells. These are characterized by negative membrane voltages and constant low levels of calcium. This Rattus norvegicus (Rat) protein is Leucine-rich repeat-containing protein 26 (Lrrc26).